Consider the following 513-residue polypeptide: MSELILIPGETTLAQLEQVWRQGLAVRLADSARPGIAESAARIAAAANGEAPVYGVNTGFGKLASIKIAARDTATLQRNLILSHCCGVGEPVEPETVRLIMVLKLLSLGRGASGVRPEVIQLIEDMLARGVLPVIPSQGSVGASGDLAPLAHMAAAMLGEGRAVHEGREMSSAEALASAGLKPVVLAAKEGLALINGTQVSTAFALAGLFEAFASARAALVTSSLSTDAIMGSTAPFLDEIHTLRGHRGQIVAARTIRALMDGSEIRESHREGDSRVQDPYCIRCQPQVTGACIDLLWQAARTLEIESNAATDNPLVLVGADRIVSGGNFHAEPVAFAADQIALAIAEIGAISQRRIALMVDPALSHDLPPFLTPDPGLNSGLMIAEVTSAALMSENKHLATPCSTDSTPTSANQEDHVSMAAHGARRLKRMNANLAQILGIEALCASAGVEFRAPLATSAPLQAVIAALRQTVPALEQDRYLAPDLAESARLVREGVLVGAIPSHLLDEVRP.

A cross-link (5-imidazolinone (Ala-Gly)) is located at residues 143–145; sequence ASG. Position 144 is a 2,3-didehydroalanine (Ser) (serine 144).

This sequence belongs to the PAL/histidase family. Contains an active site 4-methylidene-imidazol-5-one (MIO), which is formed autocatalytically by cyclization and dehydration of residues Ala-Ser-Gly.

It localises to the cytoplasm. The catalysed reaction is L-histidine = trans-urocanate + NH4(+). The protein operates within amino-acid degradation; L-histidine degradation into L-glutamate; N-formimidoyl-L-glutamate from L-histidine: step 1/3. This chain is Histidine ammonia-lyase, found in Paracoccus denitrificans (strain Pd 1222).